The sequence spans 129 residues: Urease subunit beta (129 aa).

Belongs to the urease beta subunit family. Heterotrimer of UreA (gamma), UreB (beta) and UreC (alpha) subunits. Three heterotrimers associate to form the active enzyme.

It is found in the cytoplasm. The enzyme catalyses urea + 2 H2O + H(+) = hydrogencarbonate + 2 NH4(+). It participates in nitrogen metabolism; urea degradation; CO(2) and NH(3) from urea (urease route): step 1/1. The sequence is that of Urease subunit beta from Photorhabdus laumondii subsp. laumondii (strain DSM 15139 / CIP 105565 / TT01) (Photorhabdus luminescens subsp. laumondii).